The following is a 228-amino-acid chain: MTDLPRAVVLLSGGLDSATCLAIARDMGLETYALSVAYGQRHAAELTASRRVAHALGAREHRVASVSLGEFGGSALTDPAIAVPEDAAPGGIPVTYVPARNTVMLSMALAWAEVLGARHIFVGVNAVDYSGYPDCRPAFIQAFETMANLATKAGVEGHPTTIHAPLIDLSKADIIRRGVALGVDYGLTVSCYQADDDGRACGRCDACRLRREGFAAAGIADPTRYQAR.

ATP is bound at residue 11–21 (LSGGLDSATCL). Zn(2+)-binding residues include C191, C201, C204, and C207.

This sequence belongs to the QueC family. Zn(2+) is required as a cofactor.

The enzyme catalyses 7-carboxy-7-deazaguanine + NH4(+) + ATP = 7-cyano-7-deazaguanine + ADP + phosphate + H2O + H(+). Its pathway is purine metabolism; 7-cyano-7-deazaguanine biosynthesis. Functionally, catalyzes the ATP-dependent conversion of 7-carboxy-7-deazaguanine (CDG) to 7-cyano-7-deazaguanine (preQ(0)). The chain is 7-cyano-7-deazaguanine synthase from Azoarcus sp. (strain BH72).